The sequence spans 152 residues: Transcriptional repressor NrdR (152 aa).

Residues Cys-3–Cys-34 fold into a zinc finger. The region spanning Ile-49 to Thr-139 is the ATP-cone domain.

Belongs to the NrdR family. Zn(2+) serves as cofactor.

In terms of biological role, negatively regulates transcription of bacterial ribonucleotide reductase nrd genes and operons by binding to NrdR-boxes. This chain is Transcriptional repressor NrdR, found in Clostridium tetani (strain Massachusetts / E88).